We begin with the raw amino-acid sequence, 176 residues long: Disulfide bond formation protein B (176 aa).

The Cytoplasmic segment spans residues 1-14 (MLQFLNRCSKGRGA). The chain crosses the membrane as a helical span at residues 15–31 (WLLMALTALVLELVALY). At 32 to 49 (FQHVMLLQPCVMCIYERA) the chain is on the periplasmic side. Cys-41 and Cys-44 are oxidised to a cystine. A helical membrane pass occupies residues 50-65 (ALFGILGASLLGAIAP). At 66-71 (KSPLRY) the chain is on the cytoplasmic side. Residues 72 to 89 (LAIFIWIYSAWKGVQLAW) form a helical membrane-spanning segment. At 90 to 144 (THTMLQLHPSPFTTCDFFVSFPSWLPLDKWFPAVFVASGDCAVKQWEFLSLEMPQ) the chain is on the periplasmic side. A disulfide bridge connects residues Cys-104 and Cys-130. The chain crosses the membrane as a helical span at residues 145–163 (WLVGIFAAYLFIAILVLIS). Over 164-176 (QFVKPKRRDLFSR) the chain is Cytoplasmic.

This sequence belongs to the DsbB family.

The protein resides in the cell inner membrane. Its function is as follows. Required for disulfide bond formation in some periplasmic proteins. Acts by oxidizing the DsbA protein. The polypeptide is Disulfide bond formation protein B (Yersinia enterocolitica serotype O:8 / biotype 1B (strain NCTC 13174 / 8081)).